The following is a 417-amino-acid chain: D-inositol 3-phosphate glycosyltransferase (417 aa).

His-10 contributes to the 1D-myo-inositol 3-phosphate binding site. UDP-N-acetyl-alpha-D-glucosamine contacts are provided by residues 16-17 and Gly-24; that span reads QP. 1D-myo-inositol 3-phosphate contacts are provided by residues 21 to 26, Lys-79, Tyr-112, Thr-136, and Arg-156; that span reads DAGGMN. Positions 230, 235, and 296 each coordinate UDP-N-acetyl-alpha-D-glucosamine. Positions 305, 306, and 308 each coordinate Mg(2+). UDP-N-acetyl-alpha-D-glucosamine is bound by residues Glu-318 and Glu-326. Mg(2+) is bound at residue Thr-332.

Belongs to the glycosyltransferase group 1 family. MshA subfamily. As to quaternary structure, homodimer.

The enzyme catalyses 1D-myo-inositol 3-phosphate + UDP-N-acetyl-alpha-D-glucosamine = 1D-myo-inositol 2-acetamido-2-deoxy-alpha-D-glucopyranoside 3-phosphate + UDP + H(+). Functionally, catalyzes the transfer of a N-acetyl-glucosamine moiety to 1D-myo-inositol 3-phosphate to produce 1D-myo-inositol 2-acetamido-2-deoxy-glucopyranoside 3-phosphate in the mycothiol biosynthesis pathway. The polypeptide is D-inositol 3-phosphate glycosyltransferase (Actinosynnema mirum (strain ATCC 29888 / DSM 43827 / JCM 3225 / NBRC 14064 / NCIMB 13271 / NRRL B-12336 / IMRU 3971 / 101)).